Reading from the N-terminus, the 447-residue chain is Protein cortex (447 aa).

WD repeat units follow at residues 108 to 148 (TYSY…IGHG), 149 to 188 (FAEY…KIMS), 198 to 237 (NMNC…ISWR), 281 to 325 (DSDW…VRDT), 344 to 380 (GELV…DQWG), and 384 to 423 (SGLD…NKMK). The D-box signature appears at 384-395 (SGLDRVRTMIFS).

It belongs to the WD repeat CORT family.

It is found in the cytoplasm. Controls wing pigmentation patterning by regulating scale cell development, thereby playing a key role in mimicry and crypsis. Probably acts as an activator of the anaphase promoting complex/cyclosome (APC/C) that promotes the ubiquitin ligase activity and substrate specificity of the APC/C. The protein is Protein cortex of Heliconius melpomene (Postman butterfly).